The chain runs to 1603 residues: Protein TIC 214 (1603 aa).

Transmembrane regions (helical) follow at residues 11–31 (VLWA…LFGL), 58–78 (LSGT…FLSI), 86–106 (LLLK…FYWY), 131–151 (IFFD…SPIL), 167–187 (LFVL…FNCI), and 213–233 (FSIF…VPFF).

Belongs to the TIC214 family. As to quaternary structure, part of the Tic complex.

It localises to the plastid. The protein localises to the chloroplast inner membrane. Functionally, involved in protein precursor import into chloroplasts. May be part of an intermediate translocation complex acting as a protein-conducting channel at the inner envelope. This chain is Protein TIC 214, found in Physcomitrium patens (Spreading-leaved earth moss).